Consider the following 335-residue polypeptide: Pyridoxal 5'-phosphate synthase subunit PdxS (335 aa).

D30 serves as a coordination point for D-ribose 5-phosphate. K87 functions as the Schiff-base intermediate with D-ribose 5-phosphate in the catalytic mechanism. G159 contacts D-ribose 5-phosphate. R171 contacts D-glyceraldehyde 3-phosphate. D-ribose 5-phosphate-binding positions include G257 and 278-279 (GS).

It belongs to the PdxS/SNZ family. Homohexamer. In the presence of PdxT, forms a dodecamer of heterodimers.

The enzyme catalyses aldehydo-D-ribose 5-phosphate + D-glyceraldehyde 3-phosphate + L-glutamine = pyridoxal 5'-phosphate + L-glutamate + phosphate + 3 H2O + H(+). Its pathway is cofactor biosynthesis; pyridoxal 5'-phosphate biosynthesis. In terms of biological role, catalyzes the formation of pyridoxal 5'-phosphate from ribose 5-phosphate (RBP), glyceraldehyde 3-phosphate (G3P) and ammonia. The ammonia is provided by the PdxT subunit. Can also use ribulose 5-phosphate and dihydroxyacetone phosphate as substrates, resulting from enzyme-catalyzed isomerization of RBP and G3P, respectively. The polypeptide is Pyridoxal 5'-phosphate synthase subunit PdxS (Pyrococcus horikoshii (strain ATCC 700860 / DSM 12428 / JCM 9974 / NBRC 100139 / OT-3)).